Here is a 152-residue protein sequence, read N- to C-terminus: Transcriptional repressor NrdR (152 aa).

The segment at 3 to 33 (CSICKKGETSVVDSRPTEDGTAIRRRRLCVC) is a zinc-finger region. The ATP-cone domain maps to 48–138 (IMVVKKNGRK…VYRNFREEKD (91 aa)).

Belongs to the NrdR family. It depends on Zn(2+) as a cofactor.

Functionally, negatively regulates transcription of bacterial ribonucleotide reductase nrd genes and operons by binding to NrdR-boxes. This is Transcriptional repressor NrdR from Pelagibacter ubique (strain HTCC1062).